The primary structure comprises 454 residues: UDP-N-acetylmuramoyl-tripeptide--D-alanyl-D-alanine ligase (454 aa).

116–122 contributes to the ATP binding site; that stretch reads GSVGKTT.

It belongs to the MurCDEF family. MurF subfamily.

Its subcellular location is the cytoplasm. It carries out the reaction D-alanyl-D-alanine + UDP-N-acetyl-alpha-D-muramoyl-L-alanyl-gamma-D-glutamyl-meso-2,6-diaminopimelate + ATP = UDP-N-acetyl-alpha-D-muramoyl-L-alanyl-gamma-D-glutamyl-meso-2,6-diaminopimeloyl-D-alanyl-D-alanine + ADP + phosphate + H(+). Its pathway is cell wall biogenesis; peptidoglycan biosynthesis. Involved in cell wall formation. Catalyzes the final step in the synthesis of UDP-N-acetylmuramoyl-pentapeptide, the precursor of murein. The chain is UDP-N-acetylmuramoyl-tripeptide--D-alanyl-D-alanine ligase from Synechocystis sp. (strain ATCC 27184 / PCC 6803 / Kazusa).